Reading from the N-terminus, the 348-residue chain is Arginine kinase Oct f 2 (348 aa).

Residues 1-83 (MAEELFKTLQ…LDAVIMDYHK (83 aa)) enclose the Phosphagen kinase N-terminal domain. Residue 56 to 60 (GVGIY) participates in substrate binding. Residues 111–347 (MIVSTRVRVG…NEIIREETNS (237 aa)) form the Phosphagen kinase C-terminal domain. Residues 114-118 (STRVR) and His-177 contribute to the ATP site. Glu-217 is a substrate binding site. Residue Arg-221 coordinates ATP. Cys-263 contributes to the substrate binding site. Residues 272–276 (RASVH) and 300–305 (RGIHGE) contribute to the ATP site. Residue Glu-305 participates in substrate binding.

It belongs to the ATP:guanido phosphotransferase family. As to expression, muscle (at protein level).

The catalysed reaction is L-arginine + ATP = N(omega)-phospho-L-arginine + ADP + H(+). Its function is as follows. Catalyzes the reversible transfer of high energy ATP gamma-phosphate group to L-arginine. The polypeptide is Arginine kinase Oct f 2 (Amphioctopus fangsiao (Ocellated octopus)).